Reading from the N-terminus, the 531-residue chain is RNA-binding protein RO60 (531 aa).

Residues 24–360 (VRNNAGGFVY…AFGNVQPANT (337 aa)) enclose the TROVE domain. The segment at 128–274 (RTGTMLLHFL…TNGLTWLLRN (147 aa)) is RNA-binding. A VWFA-like domain region spans residues 352-531 (FGNVQPANTR…VMTAFARGEV (180 aa)). Serine 369, serine 371, and threonine 438 together coordinate a divalent metal cation.

Belongs to the Ro 60 kDa family. As to quaternary structure, forms oligomers upon binding DrY RNA, The multimers are of an average size of 700 kDa and are composed of around 12 molecules of Rsr-DrY RNA.

The protein localises to the cytoplasm. Binds to several small RNAs that accumulate during recovery from UV irradiation. Contributes to the resistance of D.radiodurans to ultraviolet irradiation. In Deinococcus radiodurans (strain ATCC 13939 / DSM 20539 / JCM 16871 / CCUG 27074 / LMG 4051 / NBRC 15346 / NCIMB 9279 / VKM B-1422 / R1), this protein is RNA-binding protein RO60.